Here is a 306-residue protein sequence, read N- to C-terminus: Agmatinase (306 aa).

Mn(2+) is bound by residues histidine 126, aspartate 149, histidine 151, aspartate 153, aspartate 230, and aspartate 232.

The protein belongs to the arginase family. Agmatinase subfamily. Requires Mn(2+) as cofactor.

The enzyme catalyses agmatine + H2O = urea + putrescine. Its pathway is amine and polyamine biosynthesis; putrescine biosynthesis via agmatine pathway; putrescine from agmatine: step 1/1. Functionally, catalyzes the formation of putrescine from agmatine. The sequence is that of Agmatinase from Escherichia coli O7:K1 (strain IAI39 / ExPEC).